We begin with the raw amino-acid sequence, 232 residues long: 5'-methylthioadenosine/S-adenosylhomocysteine nucleosidase (232 aa).

E12 acts as the Proton acceptor in catalysis. Substrate-binding positions include G78, I152, and 173–174; that span reads ME. D197 (proton donor) is an active-site residue.

This sequence belongs to the PNP/UDP phosphorylase family. MtnN subfamily. In terms of assembly, homodimer.

The enzyme catalyses S-adenosyl-L-homocysteine + H2O = S-(5-deoxy-D-ribos-5-yl)-L-homocysteine + adenine. It carries out the reaction S-methyl-5'-thioadenosine + H2O = 5-(methylsulfanyl)-D-ribose + adenine. It catalyses the reaction 5'-deoxyadenosine + H2O = 5-deoxy-D-ribose + adenine. It participates in amino-acid biosynthesis; L-methionine biosynthesis via salvage pathway; S-methyl-5-thio-alpha-D-ribose 1-phosphate from S-methyl-5'-thioadenosine (hydrolase route): step 1/2. Its function is as follows. Catalyzes the irreversible cleavage of the glycosidic bond in both 5'-methylthioadenosine (MTA) and S-adenosylhomocysteine (SAH/AdoHcy) to adenine and the corresponding thioribose, 5'-methylthioribose and S-ribosylhomocysteine, respectively. Also cleaves 5'-deoxyadenosine, a toxic by-product of radical S-adenosylmethionine (SAM) enzymes, into 5-deoxyribose and adenine. Thus, is required for in vivo function of the radical SAM enzymes biotin synthase and lipoic acid synthase, that are inhibited by 5'-deoxyadenosine accumulation. The chain is 5'-methylthioadenosine/S-adenosylhomocysteine nucleosidase from Salmonella agona (strain SL483).